Consider the following 350-residue polypeptide: Methylthioribose-1-phosphate isomerase (350 aa).

Residues 47–49, Arg-89, and Gln-196 contribute to the substrate site; that span reads RGA. The active-site Proton donor is the Asp-237. 247 to 248 lines the substrate pocket; sequence NK.

It belongs to the eIF-2B alpha/beta/delta subunits family. MtnA subfamily.

The catalysed reaction is 5-(methylsulfanyl)-alpha-D-ribose 1-phosphate = 5-(methylsulfanyl)-D-ribulose 1-phosphate. The protein operates within amino-acid biosynthesis; L-methionine biosynthesis via salvage pathway; L-methionine from S-methyl-5-thio-alpha-D-ribose 1-phosphate: step 1/6. Its function is as follows. Catalyzes the interconversion of methylthioribose-1-phosphate (MTR-1-P) into methylthioribulose-1-phosphate (MTRu-1-P). This chain is Methylthioribose-1-phosphate isomerase, found in Nitratidesulfovibrio vulgaris (strain DSM 19637 / Miyazaki F) (Desulfovibrio vulgaris).